Here is a 74-residue protein sequence, read N- to C-terminus: Large ribosomal subunit protein bL31 (74 aa).

4 residues coordinate Zn(2+): cysteine 16, cysteine 18, cysteine 38, and cysteine 41.

This sequence belongs to the bacterial ribosomal protein bL31 family. Type A subfamily. As to quaternary structure, part of the 50S ribosomal subunit. Zn(2+) is required as a cofactor.

In terms of biological role, binds the 23S rRNA. The chain is Large ribosomal subunit protein bL31 from Streptomyces griseus subsp. griseus (strain JCM 4626 / CBS 651.72 / NBRC 13350 / KCC S-0626 / ISP 5235).